The sequence spans 488 residues: UDP-N-acetylmuramate--L-alanine ligase (488 aa).

129–135 (GSHGKTT) provides a ligand contact to ATP.

It belongs to the MurCDEF family.

The protein localises to the cytoplasm. The catalysed reaction is UDP-N-acetyl-alpha-D-muramate + L-alanine + ATP = UDP-N-acetyl-alpha-D-muramoyl-L-alanine + ADP + phosphate + H(+). It participates in cell wall biogenesis; peptidoglycan biosynthesis. In terms of biological role, cell wall formation. The protein is UDP-N-acetylmuramate--L-alanine ligase of Prochlorococcus marinus (strain MIT 9303).